The primary structure comprises 100 residues: uncharacterized protein (100 aa).

Over residues 65-91 the composition is skewed to basic and acidic residues; sequence DDRERHLSATGERRREQGFGTSRRKDP. The segment at 65–100 is disordered; it reads DDRERHLSATGERRREQGFGTSRRKDPSLYNWSDVK.

This sequence belongs to the chlamydial CPn_0121/CT_031/TC_0300 family.

This is an uncharacterized protein from Chlamydia trachomatis serovar D (strain ATCC VR-885 / DSM 19411 / UW-3/Cx).